The chain runs to 422 residues: Gamma-glutamyl phosphate reductase (422 aa).

Belongs to the gamma-glutamyl phosphate reductase family.

Its subcellular location is the cytoplasm. It carries out the reaction L-glutamate 5-semialdehyde + phosphate + NADP(+) = L-glutamyl 5-phosphate + NADPH + H(+). It participates in amino-acid biosynthesis; L-proline biosynthesis; L-glutamate 5-semialdehyde from L-glutamate: step 2/2. Catalyzes the NADPH-dependent reduction of L-glutamate 5-phosphate into L-glutamate 5-semialdehyde and phosphate. The product spontaneously undergoes cyclization to form 1-pyrroline-5-carboxylate. The protein is Gamma-glutamyl phosphate reductase of Shewanella piezotolerans (strain WP3 / JCM 13877).